The primary structure comprises 1174 residues: MDFASSVQRQSMFHGGADFASYCLPNRMISAKLCPKGLGGTRFWDPMIDSKVRSAIRSKRNVSYRSSLTLNADFNGRFYGHLLPAKPQNVPLGFRLLCQSSDSVGDLVGNDRNLEFAEGSDDREVTFSKEEKDTREQDSAPSLEELRDLLNKATKELEVASLNSTMFEEKAQRISEVAIALKDEAASAWNDVNQTLNVVQEAVDEESVAKEAVQKATMALSLAEARLQVALESLEAEGYNTSEESEVRDGVKDKEEALLSAKADIKECQENLASCEEQLRRLQVKKDELQKEVDRLNEAAERAQISALKAEEDVANIMVLAEQAVAFELEATQRVNDAEIALQRAEKTLFGSQTQETTQGKVLDGKNTIVGEDEVLSEIVDVSHQAERDLVVVGVSSDVGTQSYESDNENGKPTADFAKEAEGEAEKSKNVVLTKKQEVQKDLPRESSSHNGTKTSLKKSSRFFPASFFSSNGDGTATVFESLVESAKQQWPKLILGFTLLGAGVAIYSNGVGRNNQLPQQPNIVSTSAEDVSSSTKPLIRQMQKLPKRIKKLLEMFPQQEVNEEEASLLDVLWLLLASVIFVPLFQKIPGGSPVLGYLAAGILIGPYGLSIIRNVHGTKAIAEFGVVFLLFNIGLELSVERLSSMKKYVFGLGSAQVLVTAAVIGLITHYVAGQAGPAAIVIGNGLALSSTAVVLQVLQERGESTSRHGRATFSVLLFQDLAVVVLLILIPLISPNSSKGGIGFQAIAEALGLAAIKAAVAITGIIAGGRLLLRPIYKQIAENRNAEIFSANTLLVILGTSLLTARAGLSMALGAFLAGLLLAETEFSLQVESDIAPYRGLLLGLFFMTVGMSIDPKLLLANFPLIMGTLGLLLVGKTILVVIIGKLFGISIISAVRVGLLLAPGGEFAFVAFGEAVNQGIMTPQLSSLLFLVVGISMALTPWLAAGGQLIASRFELQDVRSLLPVESETDDLQGHIIICGFGRIGQIIAQLLSERLIPFVALDVSSDRVAIGRSLDLPVYFGDAGSREVLHKIGADRACAAAIALDTPGANYRCVWALSKYFPNVKTFVRAHDVDHGLNLEKAGATAVVPETLEPSLQLAAAVLAQAKLPTSEIATTINEFRSRHLSELAELCEASGSSLGYGFSRSTSKPKPPSPSETSDDNQIIEGTLAI.

A chloroplast-targeting transit peptide spans 1–57 (MDFASSVQRQSMFHGGADFASYCLPNRMISAKLCPKGLGGTRFWDPMIDSKVRSAIR). At 58 to 565 (SKRNVSYRSS…MFPQQEVNEE (508 aa)) the chain is on the stromal side. Positions 119–141 (GSDDREVTFSKEEKDTREQDSAP) are disordered. The stretch at 142–350 (SLEELRDLLN…ALQRAEKTLF (209 aa)) forms a coiled coil. Lys170 is modified (N6-acetyllysine; by NSI). Over residues 420 to 448 (EAEGEAEKSKNVVLTKKQEVQKDLPRESS) the composition is skewed to basic and acidic residues. The segment at 420–457 (EAEGEAEKSKNVVLTKKQEVQKDLPRESSSHNGTKTSL) is disordered. A helical transmembrane segment spans residues 566–586 (EASLLDVLWLLLASVIFVPLF). Over 587–592 (QKIPGG) the chain is Chloroplast intermembrane. A helical transmembrane segment spans residues 593-613 (SPVLGYLAAGILIGPYGLSII). The Stromal segment spans residues 614–620 (RNVHGTK). A helical membrane pass occupies residues 621–641 (AIAEFGVVFLLFNIGLELSVE). Topologically, residues 642–648 (RLSSMKK) are chloroplast intermembrane. A helical transmembrane segment spans residues 649 to 669 (YVFGLGSAQVLVTAAVIGLIT). Over 670–678 (HYVAGQAGP) the chain is Stromal. The chain crosses the membrane as a helical span at residues 679–699 (AAIVIGNGLALSSTAVVLQVL). At 700–713 (QERGESTSRHGRAT) the chain is on the chloroplast intermembrane side. Residues 714–734 (FSVLLFQDLAVVVLLILIPLI) traverse the membrane as a helical segment. Residues 735–746 (SPNSSKGGIGFQ) are Stromal-facing. Residues 747-767 (AIAEALGLAAIKAAVAITGII) form a helical membrane-spanning segment. The Chloroplast intermembrane portion of the chain corresponds to 768 to 807 (AGGRLLLRPIYKQIAENRNAEIFSANTLLVILGTSLLTAR). A helical transmembrane segment spans residues 808–828 (AGLSMALGAFLAGLLLAETEF). Residues 829 to 841 (SLQVESDIAPYRG) are Stromal-facing. Residues 842-862 (LLLGLFFMTVGMSIDPKLLLA) form a helical membrane-spanning segment. The Chloroplast intermembrane portion of the chain corresponds to 863 to 865 (NFP). A helical transmembrane segment spans residues 866 to 886 (LIMGTLGLLLVGKTILVVIIG). Topologically, residues 887–898 (KLFGISIISAVR) are stromal. The chain crosses the membrane as a helical span at residues 899–919 (VGLLLAPGGEFAFVAFGEAVN). Residues 920 to 928 (QGIMTPQLS) lie on the Chloroplast intermembrane side of the membrane. Residues 929-949 (SLLFLVVGISMALTPWLAAGG) traverse the membrane as a helical segment. Over 950–1174 (QLIASRFELQ…NQIIEGTLAI (225 aa)) the chain is Stromal. Positions 975-1092 (QGHIIICGFG…EKAGATAVVP (118 aa)) constitute an RCK N-terminal domain. The tract at residues 1141–1174 (SLGYGFSRSTSKPKPPSPSETSDDNQIIEGTLAI) is disordered.

This sequence belongs to the monovalent cation:proton antiporter 2 (CPA2) transporter (TC 2.A.37) family. KEA (TC 2.A.37.1) subfamily. Acetylated at Lys-170 by the stromal acetyltransferase enzyme NSI. In terms of tissue distribution, detected in leaves, stems and flowers. Expressed in shoots and roots. Mainly localized to leaf veins, hypocotyls, mesophylls and guard cells. Accumulates at high levels in small and dividing plastids (at protein level).

Its subcellular location is the plastid. It localises to the chloroplast inner membrane. The protein resides in the plastid inner membrane. The catalysed reaction is K(+)(in) + H(+)(out) = K(+)(out) + H(+)(in). Its activity is regulated as follows. Repressed by sodium ions Na(+). Electroneutral K(+)/H(+) efflux antiporter modulating monovalent cation and pH homeostasis in plastids, especially during plastid division and thylakoid membrane formation. Transports K(+) and Cs(+) preferentially relative to Na(+) or Li(+). May function in osmotic adjustment. Collaboratively with KEA1, adjusts alkaline stromal pH upon light to dark transitions in plastids. Together with KEA1, critical for chloroplast development, including chloroplast RNA-metabolism (e.g. rRNA maturation, polysome loading and RNA-protein interactions) and plastid gene expression (PGE), ion homeostasis, and photosynthesis. Contributes, during early seedling development, to the regulation of photosynthesis and abscisic acid- (ABA-) mediated primary root growth in a sucrose-dependent manner. Involved in the regulation of reactive oxygen and nitrogen species (ROS and RNS) metabolism. Required in roots for rapid hyperosmotic-induced Ca(2+) responses and for osmo-sensory potentiation in hyperosmotic conditions. May counteract resilience to drought and salt stress, involving photorespiratory pathway and stomata closure. The sequence is that of K(+) efflux antiporter 2, chloroplastic from Arabidopsis thaliana (Mouse-ear cress).